The primary structure comprises 412 residues: Shaggy-related protein kinase zeta (412 aa).

A compositionally biased stretch (pro residues) spans 1–19; the sequence is MTSIPLGPPQPPSLAPQPP. Residues 1-33 are disordered; the sequence is MTSIPLGPPQPPSLAPQPPHLHGGDSLKRRPDI. The segment covering 22 to 33 has biased composition (basic and acidic residues); that stretch reads HGGDSLKRRPDI. A Phosphoserine modification is found at serine 26. In terms of domain architecture, Protein kinase spans 72–356; sequence YMAERVVGTG…ALEACAHPFF (285 aa). Residues 78–86 and lysine 101 contribute to the ATP site; that span reads VGTGSFGIV. At serine 127 the chain carries Phosphoserine. Phosphothreonine is present on residues threonine 136 and threonine 137. Residue aspartate 197 is the Proton acceptor of the active site. A Phosphoserine modification is found at serine 219. A Phosphotyrosine modification is found at tyrosine 232. At serine 252 the chain carries Phosphoserine. Threonine 293 is modified (phosphothreonine). At serine 342 the chain carries Phosphoserine. At threonine 346 the chain carries Phosphothreonine.

This sequence belongs to the protein kinase superfamily. CMGC Ser/Thr protein kinase family. GSK-3 subfamily. Binds to KIB1. Interacts with beet curly top virus AL4/C4 and tomato golden mosaic virus AL4/AC4. Autophosphorylated mainly on threonine and serine residues.

The catalysed reaction is L-seryl-[protein] + ATP = O-phospho-L-seryl-[protein] + ADP + H(+). It catalyses the reaction L-threonyl-[protein] + ATP = O-phospho-L-threonyl-[protein] + ADP + H(+). Its function is as follows. May mediate extracellular signals to regulate transcription in differentiating cells. This chain is Shaggy-related protein kinase zeta (ASK6), found in Arabidopsis thaliana (Mouse-ear cress).